The chain runs to 598 residues: MRIEDFSLKDVSSSPGVYLMKDSQGTVLYVGKAKNLRNRLSSYLQKKGDSRKRIPFLMKKTTDIDTIVVSNETEAILLENNLIKKYQPRYNVLLKDDKTFFCLSVSLEHPWPRIEAIRTRALSPGKKKQWLFGPYVSAEACYALLEVISLWFPLRTCSDREFSTRQRPCVLYEMKRCLAPCVGLCSQTEYQETLDKAVLFLKGDVRSTISNLEKAIEKASQEQKFEHAAALYRTLTLIRQTMAKQHVEKFQAYDIDVLGLYRKGSLAIVSVLSVYSGKLLGARYFIFPENAQEDSALFSSFILQYYAENPRIPKEIFVPVSLDSPELPYLLNTAEPPKIRCPKTEYGKELLALAHKNAAEQAKPFNSITPPYEELQHFFNLSQYPYRIECYDNAHLQGEHNVGVCIVFENGLFSPKQYRTFSITSHGDDLAAFEEVLTRRFRSLTTELPNLIVIDGGRNQFKRAQRILEELNLTGITVVTIAKESGNHSKSLRQEKLFCETFPQGILLHPTSAILQFFQLLRDEAHRFAIQHYRKKHAKAVLTTKKIPGIGEVKTKRLLQKFKSWKRVFIASEEELKTVQGITAKDIQRIQEEGAKPE.

The GIY-YIG domain maps to 13–92 (SSPGVYLMKD…IKKYQPRYNV (80 aa)). One can recognise a UVR domain in the interval 206 to 241 (RSTISNLEKAIEKASQEQKFEHAAALYRTLTLIRQT).

It belongs to the UvrC family. Interacts with UvrB in an incision complex.

It is found in the cytoplasm. In terms of biological role, the UvrABC repair system catalyzes the recognition and processing of DNA lesions. UvrC both incises the 5' and 3' sides of the lesion. The N-terminal half is responsible for the 3' incision and the C-terminal half is responsible for the 5' incision. This Chlamydia trachomatis serovar A (strain ATCC VR-571B / DSM 19440 / HAR-13) protein is UvrABC system protein C.